The chain runs to 402 residues: Pyridinium-3,5-bisthiocarboxylic acid mononucleotide nickel insertion protein (402 aa).

It belongs to the LarC family.

It catalyses the reaction Ni(II)-pyridinium-3,5-bisthiocarboxylate mononucleotide = pyridinium-3,5-bisthiocarboxylate mononucleotide + Ni(2+). In terms of biological role, involved in the biosynthesis of a nickel-pincer cofactor ((SCS)Ni(II) pincer complex). Binds Ni(2+), and functions in nickel delivery to pyridinium-3,5-bisthiocarboxylic acid mononucleotide (P2TMN), to form the mature cofactor. Is thus probably required for the activation of nickel-pincer cofactor-dependent enzymes. This is Pyridinium-3,5-bisthiocarboxylic acid mononucleotide nickel insertion protein from Desulfitobacterium hafniense (strain DSM 10664 / DCB-2).